We begin with the raw amino-acid sequence, 208 residues long: MEPVKMTNSSDDFTQSAEPFKLFAEWLADAAKSEPNDPNAVALATVDPDGLPNVRMVLLKDFDETGFVFYTNYESKKGQEILSAEKAAMCFHWKSLRRQVRVRGPVEKVSDAEANAYYASRPRGSRIGAWASKQSRPLESRFALEKAVAEYTAKYAIGDIPRPPYWSGFRIRPVSIEFWHDRPFRLHDRVLFTRPTPEGDWNKDRLYP.

FMN is bound by residues 55–60 (RMVLLK), 70–71 (YT), Lys-76, Lys-77, and Gln-99. Substrate is bound at residue Lys-60. Substrate-binding residues include Tyr-117, Arg-121, and Ser-125. Residues 134–135 (QS) and Trp-179 each bind FMN. 185–187 (RLH) lines the substrate pocket. An FMN-binding site is contributed by Arg-189.

It belongs to the pyridoxamine 5'-phosphate oxidase family. As to quaternary structure, homodimer. The cofactor is FMN.

It carries out the reaction pyridoxamine 5'-phosphate + O2 + H2O = pyridoxal 5'-phosphate + H2O2 + NH4(+). It catalyses the reaction pyridoxine 5'-phosphate + O2 = pyridoxal 5'-phosphate + H2O2. The protein operates within cofactor metabolism; pyridoxal 5'-phosphate salvage; pyridoxal 5'-phosphate from pyridoxamine 5'-phosphate: step 1/1. Its pathway is cofactor metabolism; pyridoxal 5'-phosphate salvage; pyridoxal 5'-phosphate from pyridoxine 5'-phosphate: step 1/1. In terms of biological role, catalyzes the oxidation of either pyridoxine 5'-phosphate (PNP) or pyridoxamine 5'-phosphate (PMP) into pyridoxal 5'-phosphate (PLP). This chain is Pyridoxine/pyridoxamine 5'-phosphate oxidase, found in Brucella ovis (strain ATCC 25840 / 63/290 / NCTC 10512).